Here is a 101-residue protein sequence, read N- to C-terminus: Small ribosomal subunit protein uS10 (101 aa).

This sequence belongs to the universal ribosomal protein uS10 family. Part of the 30S ribosomal subunit.

Functionally, involved in the binding of tRNA to the ribosomes. The polypeptide is Small ribosomal subunit protein uS10 (Phocaeicola vulgatus (strain ATCC 8482 / DSM 1447 / JCM 5826 / CCUG 4940 / NBRC 14291 / NCTC 11154) (Bacteroides vulgatus)).